Here is a 342-residue protein sequence, read N- to C-terminus: N-acetyl-gamma-glutamyl-phosphate reductase (342 aa).

Cys-149 is a catalytic residue.

The protein belongs to the NAGSA dehydrogenase family. Type 1 subfamily.

It localises to the cytoplasm. It carries out the reaction N-acetyl-L-glutamate 5-semialdehyde + phosphate + NADP(+) = N-acetyl-L-glutamyl 5-phosphate + NADPH + H(+). It participates in amino-acid biosynthesis; L-arginine biosynthesis; N(2)-acetyl-L-ornithine from L-glutamate: step 3/4. Functionally, catalyzes the NADPH-dependent reduction of N-acetyl-5-glutamyl phosphate to yield N-acetyl-L-glutamate 5-semialdehyde. The polypeptide is N-acetyl-gamma-glutamyl-phosphate reductase (Nitrosomonas europaea (strain ATCC 19718 / CIP 103999 / KCTC 2705 / NBRC 14298)).